Reading from the N-terminus, the 155-residue chain is Large ribosomal subunit protein eL24 (155 aa).

Residues 119 to 155 form a disordered region; it reads VKAAKKAAAPAPAKKSAPKQKAAKVTQKAAPRVGGKR. Residues 124 to 133 are compositionally biased toward low complexity; the sequence is KAAAPAPAKK.

It belongs to the eukaryotic ribosomal protein eL24 family.

The polypeptide is Large ribosomal subunit protein eL24 (RpL24) (Drosophila melanogaster (Fruit fly)).